The sequence spans 654 residues: Protein fem-1 homolog A (654 aa).

ANK repeat units lie at residues 2–31, 40–70, 82–111, 115–145, 149–178, 182–211, and 214–243; these read DLHT…REEI, GGGT…SVEA, EGAP…SVNR, TNST…DLEV, HGHT…QVNR, KGNT…RMER, and YGMT…GHGQ. Residue Ser108 is modified to Phosphoserine. The segment at 241 to 265 is disordered; the sequence is HGQLSGTELPGEGSSQMAGNHCSTP. A compositionally biased stretch (polar residues) spans 253–263; the sequence is GSSQMAGNHCS. 2 TPR repeats span residues 283 to 317 and 375 to 408; these read VEAL…RHQG and SYYI…QQNN. ANK repeat units follow at residues 519–561 and 565–594; these read NGFT…DPDS and DNNT…HMDA. Ser608 is modified (phosphoserine).

Belongs to the fem-1 family. In terms of assembly, component of a CRL2 E3 ubiquitin-protein ligase complex, also named ECS (Elongin BC-CUL2/5-SOCS-box protein) complex, composed of CUL2, Elongin BC (ELOB and ELOC), RBX1 and substrate-specific adapter FEM1A. Interacts with PTGER4. Interacts with NFKB1; the interaction is direct. Post-translationally, phosphorylated; highly phosphorylated in myoblasts and myotubes. Phosphorylation at Ser-108 and Ser-608 promote PGE2-EP4-mediated inhibition of inflammation. Dephosphorylated by protein phosphatase 2A (PP2A).

It is found in the mitochondrion. The protein resides in the cytoplasm. Its pathway is protein modification; protein ubiquitination. Substrate-recognition component of a Cul2-RING (CRL2) E3 ubiquitin-protein ligase complex of the DesCEND (destruction via C-end degrons) pathway, which recognizes a C-degron located at the extreme C terminus of target proteins, leading to their ubiquitination and degradation. The C-degron recognized by the DesCEND pathway is usually a motif of less than ten residues and can be present in full-length proteins, truncated proteins or proteolytically cleaved forms. The CRL2(FEM1A) complex specifically recognizes proteins with an arginine at the C-terminus: recognizes and binds proteins ending with -Lys/Arg-Xaa-Arg and -Lys/Arg-Xaa-Xaa-Arg C-degrons, such as SIL1 or OR51B2, leading to their ubiquitination and degradation. Involved in PGE2-EP4-mediated inhibition of inflammation of macrophages via interaction with NFKB1 and PTGER4. Promotes inflammation in brain microglia through MAP2K4/MKK4-mediated signaling. This is Protein fem-1 homolog A from Rattus norvegicus (Rat).